Consider the following 49-residue polypeptide: Osteocalcin (49 aa).

The 47-residue stretch at 1 to 47 (YLDHGLGAPAPYPDPLEPRREVCELNPDCDELADHIGFQEAYRRFYG) folds into the Gla domain. Pro9 bears the Hydroxyproline mark. 4 residues coordinate Ca(2+): Glu17, Glu21, Glu24, and Asp30. 4-carboxyglutamate is present on residues Glu17, Glu21, and Glu24. The cysteines at positions 23 and 29 are disulfide-linked.

This sequence belongs to the osteocalcin/matrix Gla protein family. Post-translationally, gamma-carboxyglutamate residues are formed by vitamin K dependent carboxylation by GGCX. These residues are essential for the binding of calcium. Decarboxylation promotes the hormone activity.

It is found in the secreted. In terms of biological role, the carboxylated form is one of the main organic components of the bone matrix, which constitutes 1-2% of the total bone protein. It acts as a negative regulator of bone formation and is required to limit bone formation without impairing bone resorption or mineralization. The carboxylated form binds strongly to apatite and calcium. Its function is as follows. The uncarboxylated form acts as a hormone secreted by osteoblasts, which regulates different cellular processes, such as energy metabolism, male fertility and brain development. Regulates of energy metabolism by acting as a hormone favoring pancreatic beta-cell proliferation, insulin secretion and sensitivity and energy expenditure. Uncarboxylated osteocalcin hormone also promotes testosterone production in the testes: acts as a ligand for G protein-coupled receptor GPRC6A at the surface of Leydig cells, initiating a signaling response that promotes the expression of enzymes required for testosterone synthesis in a CREB-dependent manner. Also acts as a regulator of brain development: osteocalcin hormone crosses the blood-brain barrier and acts as a ligand for GPR158 on neurons, initiating a signaling response that prevents neuronal apoptosis in the hippocampus, favors the synthesis of all monoamine neurotransmitters and inhibits that of gamma-aminobutyric acid (GABA). Osteocalcin also crosses the placenta during pregnancy and maternal osteocalcin is required for fetal brain development. This is Osteocalcin (BGLAP) from Sus scrofa (Pig).